Reading from the N-terminus, the 953-residue chain is Trafficking kinesin-binding protein 1 (953 aa).

One can recognise an HAP1 N-terminal domain in the interval 47-354 (LEEQLPHYKL…EELKNLRNKT (308 aa)). Positions 104 to 356 (QMTKTYNDID…LKNLRNKTMP (253 aa)) form a coiled coil. The tract at residues 359 to 509 (TSRRYHSLGL…RRLSLRRENY (151 aa)) is interaction with HGS. An O-linked (GlcNAc) serine glycan is attached at Ser447. A disordered region spans residues 472 to 495 (AADLGNDERSKKPGTPGTPGSHDL). A coiled-coil region spans residues 492–532 (SHDLETALRRLSLRRENYLSERRFFEEEQERKLQELAEKGE). Ser537 bears the Phosphoserine mark. The segment at 658–672 (PGKCMSQTNSTFTFT) is interaction with OGT. Ser680 and Ser719 each carry an O-linked (GlcNAc) serine glycan. Ser719 is subject to Phosphoserine. Residues 777–796 (VIPSTPPNSPMQTPTSSPPS) form a disordered region. The span at 786-796 (PMQTPTSSPPS) shows a compositional bias: low complexity. Position 919 is a phosphoserine (Ser919). Thr935 carries O-linked (GlcNAc) threonine glycosylation.

The protein belongs to the milton family. As to quaternary structure, interacts with RHOT1 and RHOT2. Found in a complex with KIF5B, OGT, RHOT1 and RHOT2. Interacts with HGS. Interacts with GABRA1. Interacts with KIF5C. Interacts with OGT; stable interaction is not required for glycosylation of this protein by OGT. Isoform 1 interacts with OGT. Post-translationally, O-glycosylated. Glycosylated by OGT; glycosylation in response to increased extracellular glucose levels is required for and leads to regulation of mitochondrial motility by OGT. High expression in spinal cord and moderate expression in all other tissues and specific brain regions examined. Expressed in all cell lines examined.

Its subcellular location is the cytoplasm. It localises to the nucleus. The protein resides in the mitochondrion. It is found in the early endosome. The protein localises to the endosome. Its subcellular location is the mitochondrion membrane. It localises to the cell cortex. Functionally, involved in the regulation of endosome-to-lysosome trafficking, including endocytic trafficking of EGF-EGFR complexes and GABA-A receptors. Involved in mitochondrial motility. When O-glycosylated, abolishes mitochondrial motility. Crucial for recruiting OGT to the mitochondrial surface of neuronal processes. TRAK1 and RHOT form an essential protein complex that links KIF5 to mitochondria for light chain-independent, anterograde transport of mitochondria. In Homo sapiens (Human), this protein is Trafficking kinesin-binding protein 1 (TRAK1).